We begin with the raw amino-acid sequence, 132 residues long: Peptide methionine sulfoxide reductase MsrB (132 aa).

One can recognise a MsrB domain in the interval 8-130; the sequence is LDSWREELTE…NSASLKLVPR (123 aa). 4 residues coordinate Zn(2+): Cys47, Cys50, Cys96, and Cys99. The active-site Nucleophile is the Cys119.

The protein belongs to the MsrB Met sulfoxide reductase family. It depends on Zn(2+) as a cofactor.

The enzyme catalyses L-methionyl-[protein] + [thioredoxin]-disulfide + H2O = L-methionyl-(R)-S-oxide-[protein] + [thioredoxin]-dithiol. This Pseudomonas aeruginosa (strain UCBPP-PA14) protein is Peptide methionine sulfoxide reductase MsrB.